The chain runs to 1068 residues: Integrator complex subunit 3 homolog (1068 aa).

2 disordered regions span residues 916-939 and 1001-1068; these read YPSSSPNKRKRPPKGISVSTSTPS and VGRR…NDSD. Phosphoserine occurs at positions 1038, 1039, 1043, and 1044.

Belongs to the Integrator subunit 3 family. Belongs to the multiprotein complex Integrator, at least composed of IntS1, IntS2, IntS3, IntS4, omd/IntS5, IntS6, defl/IntS7, IntS8, IntS9, IntS10, IntS11, IntS12, asun/IntS13, IntS14 and IntS15. The core complex associates with protein phosphatase 2A subunits mts/PP2A and Pp2A-29B, to form the Integrator-PP2A (INTAC) complex.

The protein localises to the nucleus. It localises to the cytoplasm. Its function is as follows. Component of the integrator complex, a multiprotein complex that terminates RNA polymerase II (Pol II) transcription in the promoter-proximal region of genes. The integrator complex provides a quality checkpoint during transcription elongation by driving premature transcription termination of transcripts that are unfavorably configured for transcriptional elongation: the complex terminates transcription by (1) catalyzing dephosphorylation of the C-terminal domain (CTD) of Pol II subunit Polr2A/Rbp1 and Spt5, and (2) degrading the exiting nascent RNA transcript via endonuclease activity. The integrator complex is also involved in the 3'-end processing of the U7 snRNA, and also the spliceosomal snRNAs U1, U2, U4 and U5. The chain is Integrator complex subunit 3 homolog (IntS3) from Drosophila sechellia (Fruit fly).